We begin with the raw amino-acid sequence, 296 residues long: Pre-mRNA-splicing factor CWC23 (296 aa).

In terms of domain architecture, J spans 14 to 86 (DLYKLLELNY…AKKAEYDQWV (73 aa)).

This sequence belongs to the DnaJ family. In terms of assembly, associated with the spliceosome.

The protein localises to the cytoplasm. It is found in the nucleus. In terms of biological role, involved in pre-mRNA splicing. May be involved in endoplasmic reticulum-associated protein degradation (ERAD) and required for growth at low and high temperatures. This is Pre-mRNA-splicing factor CWC23 (CWC23) from Candida glabrata (strain ATCC 2001 / BCRC 20586 / JCM 3761 / NBRC 0622 / NRRL Y-65 / CBS 138) (Yeast).